The primary structure comprises 102 residues: Small ribosomal subunit protein uS10 (102 aa).

It belongs to the universal ribosomal protein uS10 family. Part of the 30S ribosomal subunit.

Its function is as follows. Involved in the binding of tRNA to the ribosomes. This Roseiflexus castenholzii (strain DSM 13941 / HLO8) protein is Small ribosomal subunit protein uS10.